Here is a 152-residue protein sequence, read N- to C-terminus: CASP-like protein 5B3 (152 aa).

Residues 1–21 (MIDIPGTPGTLTGLVLRISQC) lie on the Cytoplasmic side of the membrane. 2 consecutive transmembrane segments (helical) span residues 22 to 42 (VFAA…SFTA) and 43 to 63 (FCYL…LAIL). The Extracellular segment spans residues 64–77 (DTFALVRKKTLLSP). A helical transmembrane segment spans residues 78 to 98 (VLVSLFVVGDWVTSTLSLAGA). At 99-127 (SSSAGITVLYFGDLGSCSFEAECWKYQLS) the chain is on the cytoplasmic side. A helical transmembrane segment spans residues 128–148 (VALAFLCWITIAVSSLTTLWL). The Extracellular segment spans residues 149–152 (LASA).

It belongs to the Casparian strip membrane proteins (CASP) family. In terms of assembly, homodimer and heterodimers. As to expression, expressed in the stele of the root and in leaves.

It localises to the cell membrane. The protein is CASP-like protein 5B3 of Arabidopsis thaliana (Mouse-ear cress).